A 759-amino-acid polypeptide reads, in one-letter code: uncharacterized protein (759 aa).

Disordered stretches follow at residues 1–31 and 188–211; these read MDGN…TSFQ and NDEG…PFAN. Residues 17–31 are compositionally biased toward low complexity; it reads LSPLQTSFPSSTSFQ. A compositionally biased stretch (acidic residues) spans 189–207; sequence DEGEDVKDNEQDDNIDESD. A run of 10 helical transmembrane segments spans residues 434–454, 456–476, 486–505, 517–537, 555–575, 597–617, 620–640, 643–663, 670–690, and 726–746; these read YFRT…ILPM, FQGG…VGIL, MYNS…LSRA, FCFS…YIVL, MFYA…GAAL, DKWK…VNQA, SQWP…YFTA, FGSN…LGNI, GVAF…GLAA, and LVMV…ALVV.

Belongs to the ThrE exporter (TC 2.A.79) family.

The protein localises to the endoplasmic reticulum membrane. This is an uncharacterized protein from Schizosaccharomyces pombe (strain 972 / ATCC 24843) (Fission yeast).